Consider the following 615-residue polypeptide: Neurosecretory protein VGF (615 aa).

The first 22 residues, 1 to 22, serve as a signal peptide directing secretion; it reads MKALRLSASALFCLLLINGLGA. Disordered stretches follow at residues 22–201 and 218–257; these read AAPP…ESPG and PERA…PKTH. Pro residues-rich tracts occupy residues 25–35 and 129–141; these read PGRPEAQPPPL and PESP…PRPQ. Residues 179-194 show a composition bias toward low complexity; that stretch reads ETAAAETETRTHTLTR. Residue Gln-310 is modified to Pyrrolidone carboxylic acid. The disordered stretch occupies residues 342-600; sequence RQRGLGGRGL…EAEERRLQEQ (259 aa). Positions 378-394 are enriched in acidic residues; that stretch reads VGEEDEEAAEAEAEAEE. Over residues 415-433 the composition is skewed to basic and acidic residues; sequence AEDKRSQEETPGHRRKEAE. Ser-420 carries the post-translational modification Phosphoserine; by FAM20C. Thr-424 bears the Phosphothreonine; by FAM20C mark. Residues 434 to 448 show a composition bias toward acidic residues; it reads GTEEGGEEEDDEEMD. Over residues 487 to 497 the composition is skewed to pro residues; that stretch reads PPEPVPPPRAA. Proline amide is present on Pro-577. The segment covering 577–599 has biased composition (basic and acidic residues); that stretch reads PGREAQARRAQEEAEAEERRLQE.

Interacts with HSPA8 on cell membrane. Interacts with C3AR1. Interacts with C1QBP. Multiple peptides are derived from VGF, with activities in synaptic plasticity, antidepression, penile erection, autonomic activation, and increases in energy expenditure. In terms of tissue distribution, central and peripheral nervous systems, synthesized exclusively in neuronal and neuroendocrine cells.

The protein resides in the secreted. The protein localises to the cytoplasmic vesicle. It is found in the secretory vesicle. Functionally, secreted polyprotein that is packaged and proteolytically processed by prohormone convertases PCSK1 and PCSK2 in a cell-type-specific manner. VGF and peptides derived from its processing play many roles in neurogenesis and neuroplasticity associated with learning, memory, depression and chronic pain. Its function is as follows. Plays a role in the control of body fluid homeostasis by regulating vasopressin release. Suppresses presynaptic glutamatergic neurons connected to vasopressin neurons. Plays a role in the control of body fluid homeostasis by regulating vasopressin release. Activates GABAergic interneurons which are inhibitory neurons of the nervous system and thereby suppresses presynaptic glutamatergic neurons. Also stimulates feeding behavior in an orexin-dependent manner in the hypothalamus. Functions as a positive regulator for the activation of orexin neurons resulting in elevated gastric acid secretion and gastric emptying. In terms of biological role, secreted multifunctional neuropeptide that binds to different cell receptors and thereby plays multiple physiological roles including modulation of energy expenditure, pain, response to stress, gastric regulation, glucose homeostasis as well as lipolysis. Activates the G-protein-coupled receptor C3AR1 via a folding-upon-binding mechanism leading to enhanced lipolysis in adipocytes. Interacts with C1QBP receptor in macrophages and microglia causing increased levels of intracellular calcium and hypersensitivity. Functionally, plays a role in the regulation of memory formation and depression-related behaviors potentially by influencing synaptic plasticity and neurogenesis. Induces acute and transient activation of the NTRK2/TRKB receptor and subsequent CREB phosphorylation. Also induces insulin secretion in insulinoma cells by increasing intracellular calcium mobilization. Its function is as follows. Has bactericidal activity against M.luteus, and antifungal activity against P. Pastoris. The polypeptide is Neurosecretory protein VGF (VGF) (Homo sapiens (Human)).